We begin with the raw amino-acid sequence, 539 residues long: Tyrosinase (539 aa).

The Cu cation site is built by His63, His84, His93, His290, His294, and His333. Residues 82-84 (CHH) constitute a cross-link (2'-(S-cysteinyl)-histidine (Cys-His)).

It belongs to the tyrosinase family. In terms of assembly, homotetramer. The cofactor is Cu(2+). Post-translationally, the N-terminus is blocked.

The enzyme catalyses 2 L-dopa + O2 = 2 L-dopaquinone + 2 H2O. It carries out the reaction L-tyrosine + O2 = L-dopaquinone + H2O. Its activity is regulated as follows. Activated by acidifying treatment at pH 3.0. Its function is as follows. This is a copper-containing oxidase that functions in the formation of pigments such as melanins and other polyphenolic compounds. The chain is Tyrosinase (melO) from Aspergillus oryzae (strain ATCC 42149 / RIB 40) (Yellow koji mold).